We begin with the raw amino-acid sequence, 220 residues long: Lactate utilization protein C (220 aa).

The protein belongs to the LutC/YkgG family.

Is involved in L-lactate degradation and allows cells to grow with lactate as the sole carbon source. This Anoxybacillus flavithermus (strain DSM 21510 / WK1) protein is Lactate utilization protein C.